The following is a 726-amino-acid chain: Methionine--tRNA ligase (726 aa).

The 'HIGH' region motif lies at proline 12–asparagine 22. Zn(2+)-binding residues include cysteine 143, cysteine 146, cysteine 155, and cysteine 158. The 'KMSKS' region signature appears at lysine 330–serine 334. Residue lysine 333 coordinates ATP. The tRNA-binding domain maps to phenylalanine 562–isoleucine 667.

This sequence belongs to the class-I aminoacyl-tRNA synthetase family. MetG type 1 subfamily. Homodimer. The cofactor is Zn(2+).

It is found in the cytoplasm. The catalysed reaction is tRNA(Met) + L-methionine + ATP = L-methionyl-tRNA(Met) + AMP + diphosphate. Is required not only for elongation of protein synthesis but also for the initiation of all mRNA translation through initiator tRNA(fMet) aminoacylation. This Borrelia recurrentis (strain A1) protein is Methionine--tRNA ligase.